The chain runs to 505 residues: Autophagy-related protein 18 (505 aa).

2 WD repeats span residues 246–286 (AHKG…KLYQ) and 291–330 (TYPT…EERT). The L/FRRG motif signature appears at 287–291 (FRRGT). Residues 328-380 (ERTSGGADDADSDDSGNENDGDNNSVGNGDVSSLLSDNDIESTREPYVDASRK) are disordered. Residues 335-348 (DDADSDDSGNENDG) show a composition bias toward acidic residues. Residues 349-360 (DNNSVGNGDVSS) are compositionally biased toward low complexity. Positions 368–379 (ESTREPYVDASR) are enriched in basic and acidic residues.

The protein belongs to the WD repeat PROPPIN family. Component of the PI(3,5)P2 regulatory complex.

The protein resides in the preautophagosomal structure membrane. It is found in the vacuole membrane. Its subcellular location is the endosome membrane. In terms of biological role, the PI(3,5)P2 regulatory complex regulates both the synthesis and turnover of phosphatidylinositol 3,5-bisphosphate (PtdIns(3,5)P2). Necessary for proper vacuole morphology. Plays an important role in osmotically-induced vacuole fragmentation. Required for cytoplasm to vacuole transport (Cvt) vesicle formation, pexophagy and starvation-induced autophagy. Involved in correct ATG9 trafficking to the pre-autophagosomal structure. Might also be involved in premeiotic DNA replication. This is Autophagy-related protein 18 (ATG18) from Candida glabrata (strain ATCC 2001 / BCRC 20586 / JCM 3761 / NBRC 0622 / NRRL Y-65 / CBS 138) (Yeast).